The primary structure comprises 713 residues: Phosphoribosylformylglycinamidine synthase subunit PurL (713 aa).

His-34 is a catalytic residue. Positions 37 and 73 each coordinate ATP. Glu-75 is a Mg(2+) binding site. Substrate-binding positions include Ser-76–His-79 and Arg-98. His-77 serves as the catalytic Proton acceptor. Asp-99 contributes to the Mg(2+) binding site. Gln-221 lines the substrate pocket. Residue Asp-249 participates in Mg(2+) binding. Residue Glu-292–Gln-294 coordinates substrate. 2 residues coordinate ATP: Asp-474 and Gly-511. Ser-514 serves as a coordination point for substrate.

The protein belongs to the FGAMS family. Monomer. Part of the FGAM synthase complex composed of 1 PurL, 1 PurQ and 2 PurS subunits.

The protein localises to the cytoplasm. The catalysed reaction is N(2)-formyl-N(1)-(5-phospho-beta-D-ribosyl)glycinamide + L-glutamine + ATP + H2O = 2-formamido-N(1)-(5-O-phospho-beta-D-ribosyl)acetamidine + L-glutamate + ADP + phosphate + H(+). It participates in purine metabolism; IMP biosynthesis via de novo pathway; 5-amino-1-(5-phospho-D-ribosyl)imidazole from N(2)-formyl-N(1)-(5-phospho-D-ribosyl)glycinamide: step 1/2. Functionally, part of the phosphoribosylformylglycinamidine synthase complex involved in the purines biosynthetic pathway. Catalyzes the ATP-dependent conversion of formylglycinamide ribonucleotide (FGAR) and glutamine to yield formylglycinamidine ribonucleotide (FGAM) and glutamate. The FGAM synthase complex is composed of three subunits. PurQ produces an ammonia molecule by converting glutamine to glutamate. PurL transfers the ammonia molecule to FGAR to form FGAM in an ATP-dependent manner. PurS interacts with PurQ and PurL and is thought to assist in the transfer of the ammonia molecule from PurQ to PurL. This is Phosphoribosylformylglycinamidine synthase subunit PurL from Ignicoccus hospitalis (strain KIN4/I / DSM 18386 / JCM 14125).